Here is a 618-residue protein sequence, read N- to C-terminus: Dihydroxy-acid dehydratase (618 aa).

Asp81 serves as a coordination point for Mg(2+). Cys122 contributes to the [2Fe-2S] cluster binding site. Mg(2+) contacts are provided by Asp123 and Lys124. The residue at position 124 (Lys124) is an N6-carboxylysine. [2Fe-2S] cluster is bound at residue Cys197. Residue Glu493 coordinates Mg(2+). Ser519 serves as the catalytic Proton acceptor.

The protein belongs to the IlvD/Edd family. As to quaternary structure, homodimer. [2Fe-2S] cluster serves as cofactor. Mg(2+) is required as a cofactor.

The catalysed reaction is (2R)-2,3-dihydroxy-3-methylbutanoate = 3-methyl-2-oxobutanoate + H2O. It catalyses the reaction (2R,3R)-2,3-dihydroxy-3-methylpentanoate = (S)-3-methyl-2-oxopentanoate + H2O. The protein operates within amino-acid biosynthesis; L-isoleucine biosynthesis; L-isoleucine from 2-oxobutanoate: step 3/4. It functions in the pathway amino-acid biosynthesis; L-valine biosynthesis; L-valine from pyruvate: step 3/4. Functionally, functions in the biosynthesis of branched-chain amino acids. Catalyzes the dehydration of (2R,3R)-2,3-dihydroxy-3-methylpentanoate (2,3-dihydroxy-3-methylvalerate) into 2-oxo-3-methylpentanoate (2-oxo-3-methylvalerate) and of (2R)-2,3-dihydroxy-3-methylbutanoate (2,3-dihydroxyisovalerate) into 2-oxo-3-methylbutanoate (2-oxoisovalerate), the penultimate precursor to L-isoleucine and L-valine, respectively. This is Dihydroxy-acid dehydratase from Bordetella avium (strain 197N).